We begin with the raw amino-acid sequence, 406 residues long: Pyruvate dehydrogenase E1 component subunit beta-2, chloroplastic (406 aa).

The N-terminal 44 residues, 1–44, are a transit peptide targeting the chloroplast; sequence MSSIIHGAGAATTTLSTFNSVDSKKLFVAPSRTNLSVRSQRYIV. E142 contacts thiamine diphosphate. Residues V195, A243, I244, and N248 each contribute to the K(+) site.

As to quaternary structure, tetramer of 2 alpha and 2 beta subunits. Requires thiamine diphosphate as cofactor.

The protein localises to the plastid. The protein resides in the chloroplast. It catalyses the reaction N(6)-[(R)-lipoyl]-L-lysyl-[protein] + pyruvate + H(+) = N(6)-[(R)-S(8)-acetyldihydrolipoyl]-L-lysyl-[protein] + CO2. Functionally, the pyruvate dehydrogenase complex catalyzes the overall conversion of pyruvate to acetyl-CoA and CO(2). It contains multiple copies of three enzymatic components: pyruvate dehydrogenase (E1), dihydrolipoamide acetyltransferase (E2) and lipoamide dehydrogenase (E3). This Arabidopsis thaliana (Mouse-ear cress) protein is Pyruvate dehydrogenase E1 component subunit beta-2, chloroplastic (PDH-E1 BETA).